The following is a 104-amino-acid chain: Protein S100-A14 (104 aa).

The region spanning 27–61 is the EF-hand domain; it reads KNFHQYSVEGGKETLTPSELRDLVTQQLPHLMPSN.

The protein belongs to the S-100 family. In terms of assembly, homodimer. Interacts with AGER.

It is found in the cytoplasm. Modulates P53/TP53 protein levels, and thereby plays a role in the regulation of cell survival and apoptosis. Depending on the context, it can promote cell proliferation or apoptosis. Plays a role in the regulation of cell migration by modulating the levels of MMP2, a matrix protease that is under transcriptional control of P53/TP53. Does not bind calcium. This Bos taurus (Bovine) protein is Protein S100-A14 (S100A14).